The primary structure comprises 532 residues: MWDSPIIFTRMRELVQSVSPAALSWAVVAVYIGTFFWLKSRSSKQRLPLPPGPRGLPLIGNSFQTPAVNPWEKYKEWSDEYGPVMTLSLGLTTTIILSSHQVANDLMEKKSTIYSSRPQLVMFNRLSGGMNSSGMEYGKRWRDHRSLQASVLRPWMTQRYTALRDVETKQLLAELLKTDDFSSCFKRMVASLFMTLAYGKRVQYPDDPEIRGMEELVRVKSEAGEASFRATGQLVEYIPLLQYLPSFLTPWKEMCDRICEQFNKTFVDRLREGINAPAWTWAKEVSKHKVARPMSELEVSYTLGTLYEASLTSQQILRIIVLVAALYPEKAAKAQEELDKVVGADRLPAAADVRNLPYIDAFVKEALRWRPFAPLGAPRESIRDVEYNGYLIPKGATILVNQWALDYNEDVFPEPFSFLPERWIANPDLPFSTFGFGQRGCPGRYFAQDSLFISTARLLWAFNIRTASPVEVEDMLRNPSAGAFLSPIPEFDATFAARDAQRKALIEKEWEIAPKESYAILREVEKELTSEA.

A helical transmembrane segment spans residues 18–38; the sequence is VSPAALSWAVVAVYIGTFFWL. Residue Cys-441 coordinates heme.

Belongs to the cytochrome P450 family. The cofactor is heme.

It is found in the membrane. The catalysed reaction is preechinulin + reduced [NADPH--hemoprotein reductase] + O2 = neoechinulin A + oxidized [NADPH--hemoprotein reductase] + 2 H2O + H(+). It functions in the pathway secondary metabolite biosynthesis. It participates in alkaloid biosynthesis. In terms of biological role, cytochrome P450 monooxygenase; part of the gene cluster that mediates the biosynthesis of echinulin family alkaloid. The pathway begins with the biosynthesis of the cyclic dipeptide cyclo-L-Trp-L-Ala (cyclo-TA) by the NRPS criC via condensation of L-alanine and L-tryptophan. The prenyltransferase criA then catalyzes the first prenylation step, a reverse prenylation reaction at C2, to yield preechinulin. Preechinulin is the substrate of the cytochrome P450 monooxygenase criE that catalyzes the formation of the double bond between C10 and C11 to produce neoechulin A. The unique prenyltransferase criF functions as a competitive enzyme with criE for preechinulin metabolization and uses preechinulin for effective regiospecific prenylations. Preechinulin is prenylated by criF at C5 or C7. C7-prenylation leads to accumulation of tardioxopiperazine B without further modification by criF. In contrast, the C5-prenylated tardioxopiperazine A can be prenylated again by criF, predominantly at C7 to form echinulin or less frequently at C4 to give variecolorin L. CriF also accepts neoechilunin A to produce varlecolorin G (prenylation at C5) or isoechinulin A (prenylation at C7). CriF further converts isoechinulin A into dehydroechinulin. Moreover, a yet unidentified enzyme can also convert neoechilunin A into neoechilunin B by introducing a double bond between positions C14 and C17 and thus provides a further substrate to criF for C5 and C7 prenylation. The chain is Cytochrome P450 monooxygenase criE from Aspergillus cristatus (Chinese Fuzhuan brick tea-fermentation fungus).